A 686-amino-acid chain; its full sequence is Protein arginine N-methyltransferase 7 (686 aa).

SAM-dependent MTase PRMT-type domains lie at S5 to W352 and D357 to D686.

It belongs to the class I-like SAM-binding methyltransferase superfamily. Protein arginine N-methyltransferase family. PRMT7 subfamily.

Its function is as follows. Essential arginine methyltransferase that can both catalyze the formation of omega-N monomethylarginine (MMA) and symmetrical dimethylarginine (sDMA). Specifically mediates the symmetrical dimethylation of arginine residues in the small nuclear ribonucleoproteins SmD1 and SmD3. The sequence is that of Protein arginine N-methyltransferase 7 (Art7) from Aedes aegypti (Yellowfever mosquito).